Reading from the N-terminus, the 502-residue chain is ATP synthase subunit alpha (502 aa).

169–176 (GDRQTGKT) is a binding site for ATP.

It belongs to the ATPase alpha/beta chains family. As to quaternary structure, F-type ATPases have 2 components, CF(1) - the catalytic core - and CF(0) - the membrane proton channel. CF(1) has five subunits: alpha(3), beta(3), gamma(1), delta(1), epsilon(1). CF(0) has three main subunits: a(1), b(2) and c(9-12). The alpha and beta chains form an alternating ring which encloses part of the gamma chain. CF(1) is attached to CF(0) by a central stalk formed by the gamma and epsilon chains, while a peripheral stalk is formed by the delta and b chains.

It localises to the cell membrane. The catalysed reaction is ATP + H2O + 4 H(+)(in) = ADP + phosphate + 5 H(+)(out). Its function is as follows. Produces ATP from ADP in the presence of a proton gradient across the membrane. The alpha chain is a regulatory subunit. This Streptococcus pyogenes serotype M12 (strain MGAS9429) protein is ATP synthase subunit alpha.